We begin with the raw amino-acid sequence, 160 residues long: Cytochrome b6-f complex subunit 4 (160 aa).

Transmembrane regions (helical) follow at residues 36-56, 95-115, and 131-151; these read LLYM…GLAV, LLGV…PFIE, and TVFL…TLPI.

The protein belongs to the cytochrome b family. PetD subfamily. The 4 large subunits of the cytochrome b6-f complex are cytochrome b6, subunit IV (17 kDa polypeptide, petD), cytochrome f and the Rieske protein, while the 4 small subunits are petG, petL, petM and petN. The complex functions as a dimer.

Its subcellular location is the plastid. The protein localises to the chloroplast thylakoid membrane. Functionally, component of the cytochrome b6-f complex, which mediates electron transfer between photosystem II (PSII) and photosystem I (PSI), cyclic electron flow around PSI, and state transitions. This chain is Cytochrome b6-f complex subunit 4, found in Coleochaete orbicularis (Charophycean green alga).